Consider the following 553-residue polypeptide: ATP synthase subunit alpha (553 aa).

173 to 180 contacts ATP; that stretch reads GDRQTGKT. Residues 527 to 553 are disordered; sequence EALDPSAVEREEIAVHHRKPSDETAGH. Positions 533–553 are enriched in basic and acidic residues; the sequence is AVEREEIAVHHRKPSDETAGH.

This sequence belongs to the ATPase alpha/beta chains family. In terms of assembly, F-type ATPases have 2 components, CF(1) - the catalytic core - and CF(0) - the membrane proton channel. CF(1) has five subunits: alpha(3), beta(3), gamma(1), delta(1), epsilon(1). CF(0) has three main subunits: a(1), b(2) and c(9-12). The alpha and beta chains form an alternating ring which encloses part of the gamma chain. CF(1) is attached to CF(0) by a central stalk formed by the gamma and epsilon chains, while a peripheral stalk is formed by the delta and b chains.

It localises to the cell membrane. The catalysed reaction is ATP + H2O + 4 H(+)(in) = ADP + phosphate + 5 H(+)(out). Its function is as follows. Produces ATP from ADP in the presence of a proton gradient across the membrane. The alpha chain is a regulatory subunit. The protein is ATP synthase subunit alpha of Parafrankia sp. (strain EAN1pec).